We begin with the raw amino-acid sequence, 279 residues long: Energy-coupling factor transporter ATP-binding protein EcfA1 (279 aa).

One can recognise an ABC transporter domain in the interval 5 to 240 (IELKKVTFNY…GDELLQLGLD (236 aa)). 40-47 (GHNGSGKS) provides a ligand contact to ATP.

Belongs to the ABC transporter superfamily. Energy-coupling factor EcfA family. As to quaternary structure, forms a stable energy-coupling factor (ECF) transporter complex composed of 2 membrane-embedded substrate-binding proteins (S component), 2 ATP-binding proteins (A component) and 2 transmembrane proteins (T component).

The protein localises to the cell membrane. Its function is as follows. ATP-binding (A) component of a common energy-coupling factor (ECF) ABC-transporter complex. Unlike classic ABC transporters this ECF transporter provides the energy necessary to transport a number of different substrates. In Streptococcus pyogenes serotype M5 (strain Manfredo), this protein is Energy-coupling factor transporter ATP-binding protein EcfA1.